A 396-amino-acid chain; its full sequence is Chaperone protein DnaJ 1 (396 aa).

The J domain occupies 10–75; the sequence is DYYKVLGVPK…KKRKEYDEAR (66 aa). Residues 127 to 137 show a composition bias toward gly residues; that stretch reads LFNRGGAGPGT. The tract at residues 127-149 is disordered; it reads LFNRGGAGPGTGTRTQPRRGQDI. The CR-type zinc finger occupies 163-241; it reads GATVPLRMSS…CKGSGRAKSS (79 aa). Zn(2+) contacts are provided by C176, C179, C192, C195, C215, C218, C229, and C232. CXXCXGXG motif repeat units follow at residues 176-183, 192-199, 215-222, and 229-236; these read CKACSGTG, CPTCVGTG, CPDCKGRG, and CEICKGSG.

Belongs to the DnaJ family. In terms of assembly, homodimer. Requires Zn(2+) as cofactor.

It localises to the cytoplasm. Participates actively in the response to hyperosmotic and heat shock by preventing the aggregation of stress-denatured proteins and by disaggregating proteins, also in an autonomous, DnaK-independent fashion. Unfolded proteins bind initially to DnaJ; upon interaction with the DnaJ-bound protein, DnaK hydrolyzes its bound ATP, resulting in the formation of a stable complex. GrpE releases ADP from DnaK; ATP binding to DnaK triggers the release of the substrate protein, thus completing the reaction cycle. Several rounds of ATP-dependent interactions between DnaJ, DnaK and GrpE are required for fully efficient folding. Also involved, together with DnaK and GrpE, in the DNA replication of plasmids through activation of initiation proteins. This is Chaperone protein DnaJ 1 from Streptomyces avermitilis (strain ATCC 31267 / DSM 46492 / JCM 5070 / NBRC 14893 / NCIMB 12804 / NRRL 8165 / MA-4680).